We begin with the raw amino-acid sequence, 237 residues long: Cytosolic-abundant heat soluble protein 86272 (237 aa).

Residues 96-125 (FKDQEKYSREQAAIARAHDKDLEKKTEEYR) form a disordered region. A compositionally biased stretch (basic and acidic residues) spans 111-125 (RAHDKDLEKKTEEYR). The stretch at 115 to 193 (KDLEKKTEEY…MNALEQSKMA (79 aa)) forms a coiled coil. CAHS motif regions lie at residues 124-142 (YRKT…LEKQ) and 161-179 (QKRE…LEHE). The segment covering 204–215 (AGTTVSGGTTVS) has biased composition (low complexity). The tract at residues 204-237 (AGTTVSGGTTVSEHTEVHDGKEKKSLGEKIKSLF) is disordered. A compositionally biased stretch (basic and acidic residues) spans 216-237 (EHTEVHDGKEKKSLGEKIKSLF).

This sequence belongs to the Cytosolic-abundant heat soluble protein (CAHS) family.

The protein localises to the cytoplasm. Its function is as follows. CAHS proteins are cytosolic heat soluble proteins that seem to contribute to the anhydrobiosis in tardigrades, but their specific mechanisms are yet to be identified. It is possible that protection during anhydrobiosis might occur via the stabilization of vitrifying small molecules such as sugars, but not via the direct glass transition of CAHS proteins themselves. This chain is Cytosolic-abundant heat soluble protein 86272, found in Hypsibius exemplaris (Freshwater tardigrade).